The following is a 136-amino-acid chain: Small ribosomal subunit protein uS19 (136 aa).

Residues 114 to 136 (RSRVSHGSAGVGATRSSKFVPLK) form a disordered region.

Belongs to the universal ribosomal protein uS19 family.

In terms of biological role, protein S19 forms a complex with S13 that binds strongly to the 16S ribosomal RNA. The polypeptide is Small ribosomal subunit protein uS19 (Methanosarcina acetivorans (strain ATCC 35395 / DSM 2834 / JCM 12185 / C2A)).